The chain runs to 458 residues: ATP synthase subunit beta (458 aa).

Residue 148–155 participates in ATP binding; it reads GGAGVGKT.

Belongs to the ATPase alpha/beta chains family. As to quaternary structure, F-type ATPases have 2 components, CF(1) - the catalytic core - and CF(0) - the membrane proton channel. CF(1) has five subunits: alpha(3), beta(3), gamma(1), delta(1), epsilon(1). CF(0) has three main subunits: a(1), b(2) and c(9-12). The alpha and beta chains form an alternating ring which encloses part of the gamma chain. CF(1) is attached to CF(0) by a central stalk formed by the gamma and epsilon chains, while a peripheral stalk is formed by the delta and b chains.

It localises to the cell inner membrane. It carries out the reaction ATP + H2O + 4 H(+)(in) = ADP + phosphate + 5 H(+)(out). Its function is as follows. Produces ATP from ADP in the presence of a proton gradient across the membrane. The catalytic sites are hosted primarily by the beta subunits. The polypeptide is ATP synthase subunit beta (Pseudomonas fluorescens (strain Pf0-1)).